The sequence spans 147 residues: uncharacterized protein (147 aa).

Residues 1-137 (MRDNTIGSLI…LYELMTKVHK (137 aa)) enclose the HTH marR-type domain. Residues 53–76 (QMELAEKVTVTQGGISRMLTRLEK) constitute a DNA-binding region (H-T-H motif).

This is an uncharacterized protein from Bacillus thuringiensis subsp. konkukian (strain 97-27).